A 132-amino-acid polypeptide reads, in one-letter code: MRDFDFSFNHKACEGCGAKCCVGESGYIFVTIQEMQQISAFLKLELEEFSQKYVKKVGYKFSLLEKDAKDLGLACVFLDLETKKCQIYSARPKQCQTFPFWESVKTFSKEQKEAFCQSCPGITQKTKETKVR.

It to M.jannaschii MJ0661.

This is an uncharacterized protein from Helicobacter pylori (strain J99 / ATCC 700824) (Campylobacter pylori J99).